We begin with the raw amino-acid sequence, 441 residues long: Xylose isomerase 1 (441 aa).

Residues His105 and Asp108 contribute to the active site. Positions 236, 272, 275, 300, 311, 313, and 343 each coordinate Mg(2+).

This sequence belongs to the xylose isomerase family. Homotetramer. Mg(2+) is required as a cofactor.

It localises to the cytoplasm. The enzyme catalyses alpha-D-xylose = alpha-D-xylulofuranose. The polypeptide is Xylose isomerase 1 (xylA1) (Xanthomonas axonopodis pv. citri (strain 306)).